A 361-amino-acid polypeptide reads, in one-letter code: 3-dehydroquinate synthase (361 aa).

NAD(+) contacts are provided by residues 105–109 (GVIGD), 129–130 (TT), K142, K151, and 169–172 (FLST). E184, H247, and H264 together coordinate Zn(2+).

This sequence belongs to the sugar phosphate cyclases superfamily. Dehydroquinate synthase family. It depends on Co(2+) as a cofactor. Zn(2+) serves as cofactor. Requires NAD(+) as cofactor.

The protein resides in the cytoplasm. The catalysed reaction is 7-phospho-2-dehydro-3-deoxy-D-arabino-heptonate = 3-dehydroquinate + phosphate. It participates in metabolic intermediate biosynthesis; chorismate biosynthesis; chorismate from D-erythrose 4-phosphate and phosphoenolpyruvate: step 2/7. Functionally, catalyzes the conversion of 3-deoxy-D-arabino-heptulosonate 7-phosphate (DAHP) to dehydroquinate (DHQ). This chain is 3-dehydroquinate synthase, found in Endomicrobium trichonymphae.